A 251-amino-acid polypeptide reads, in one-letter code: Small ribosomal subunit protein uS2 (251 aa).

This sequence belongs to the universal ribosomal protein uS2 family.

The chain is Small ribosomal subunit protein uS2 from Cereibacter sphaeroides (strain ATCC 17029 / ATH 2.4.9) (Rhodobacter sphaeroides).